Reading from the N-terminus, the 401-residue chain is Nodal homolog 3-B (401 aa).

A signal peptide spans 1-18; sequence MAFLSLFLCLVFSSPLMA. Positions 19 to 274 are excised as a propeptide; the sequence is MPPALQGRKA…KVNGFRRLRR (256 aa). N-linked (GlcNAc...) asparagine glycosylation is found at Asn-168, Asn-337, and Asn-344. 2 disulfide bridges follow: Cys-299-Cys-365 and Cys-328-Cys-396.

Belongs to the TGF-beta family. As to quaternary structure, monomer. The propeptide region interacts with bmp4 in a non-covalent manner. Expressed in the dorsal marginal region of late blastula, becoming restricted to the Spemann organizer at the early gastrula stage.

Its subcellular location is the secreted. Its function is as follows. Exhibits mesoderm-dorsalizing activity and neural-inducing activity, but lacks mesoderm-inducing activity. Regulates the expression of specific mesodermal and neural genes. Induces convergent extension movements at the embryonic midline by activating the fgf signaling pathway to induce t/bra expression in the organizer region. Acts with wnt11 to induce Spemann organizer cells and induce axis formation. The unprocessed protein antagonizes bmp-signaling. The sequence is that of Nodal homolog 3-B from Xenopus tropicalis (Western clawed frog).